A 260-amino-acid chain; its full sequence is Triosephosphate isomerase (260 aa).

Asn11–Lys13 lines the substrate pocket. His103 serves as the catalytic Electrophile. Glu175 serves as the catalytic Proton acceptor. Substrate-binding positions include Gly181, Ser220, and Gly241–Gly242.

It belongs to the triosephosphate isomerase family. Homodimer.

The protein resides in the cytoplasm. It catalyses the reaction D-glyceraldehyde 3-phosphate = dihydroxyacetone phosphate. It participates in carbohydrate biosynthesis; gluconeogenesis. The protein operates within carbohydrate degradation; glycolysis; D-glyceraldehyde 3-phosphate from glycerone phosphate: step 1/1. Its function is as follows. Involved in the gluconeogenesis. Catalyzes stereospecifically the conversion of dihydroxyacetone phosphate (DHAP) to D-glyceraldehyde-3-phosphate (G3P). The polypeptide is Triosephosphate isomerase (Shewanella denitrificans (strain OS217 / ATCC BAA-1090 / DSM 15013)).